A 528-amino-acid chain; its full sequence is UDP-glucuronosyltransferase 2B10 (528 aa).

Positions Met1–Gly23 are cleaved as a signal peptide. Asn66 carries N-linked (GlcNAc...) asparagine glycosylation. Lys134 bears the N6-succinyllysine mark. Asn314 and Asn481 each carry an N-linked (GlcNAc...) asparagine glycan. Residues Val492 to Leu512 traverse the membrane as a helical segment.

The protein belongs to the UDP-glycosyltransferase family.

Its subcellular location is the microsome membrane. The protein localises to the endoplasmic reticulum membrane. The catalysed reaction is glucuronate acceptor + UDP-alpha-D-glucuronate = acceptor beta-D-glucuronoside + UDP + H(+). Functionally, UDPGT is of major importance in the conjugation and subsequent elimination of potentially toxic xenobiotics and endogenous compounds. This Homo sapiens (Human) protein is UDP-glucuronosyltransferase 2B10 (UGT2B10).